The following is a 134-amino-acid chain: Small ribosomal subunit protein uS8c (134 aa).

Belongs to the universal ribosomal protein uS8 family. Part of the 30S ribosomal subunit.

It is found in the plastid. The protein localises to the chloroplast. One of the primary rRNA binding proteins, it binds directly to 16S rRNA central domain where it helps coordinate assembly of the platform of the 30S subunit. This chain is Small ribosomal subunit protein uS8c (rps8), found in Helianthus annuus (Common sunflower).